Consider the following 142-residue polypeptide: Large ribosomal subunit protein uL13 (142 aa).

This sequence belongs to the universal ribosomal protein uL13 family. As to quaternary structure, part of the 50S ribosomal subunit.

Its function is as follows. This protein is one of the early assembly proteins of the 50S ribosomal subunit, although it is not seen to bind rRNA by itself. It is important during the early stages of 50S assembly. The sequence is that of Large ribosomal subunit protein uL13 from Bordetella petrii (strain ATCC BAA-461 / DSM 12804 / CCUG 43448).